The following is a 348-amino-acid chain: Olfactory receptor 2T4 (348 aa).

Residues 1–57 lie on the Extracellular side of the membrane; that stretch reads MDNITWMASHTGWSDFILMGLFRQSKHPMANITWMANHTGWSDFILLGLFRQSKHPA. N-linked (GlcNAc...) asparagine glycosylation is found at Asn-31 and Asn-37. A helical transmembrane segment spans residues 58–81; it reads LLCVVIFVVFLMALSGNAVLILLI. The Cytoplasmic segment spans residues 82-89; it reads HCDAHLHT. A helical transmembrane segment spans residues 90-111; sequence PMYFFISQLSLMDMAYISVTVP. The Extracellular portion of the chain corresponds to 112-132; that stretch reads KMLLDQVMGVNKISAPECGMQ. The cysteines at positions 129 and 221 are disulfide-linked. The helical transmembrane segment at 133–152 threads the bilayer; that stretch reads MFFYVTLAGSEFFLLATMAY. Topologically, residues 153-171 are cytoplasmic; the sequence is DRYVAICHPLRYPVLMNHR. The chain crosses the membrane as a helical span at residues 172–190; sequence VCLFLSSGCWFLGSVDGFT. At 191 to 227 the chain is on the extracellular side; the sequence is FTPITMTFPFRGSREIHHFFCEVPAVLNLSCSDTSLY. N-linked (GlcNAc...) asparagine glycosylation is present at Asn-218. Residues 228–251 traverse the membrane as a helical segment; it reads EIFMYLCCVLMLLIPVVIISSSYL. The Cytoplasmic segment spans residues 252 to 268; the sequence is LILLTIHGMNSAEGRKK. The helical transmembrane segment at 269-291 threads the bilayer; sequence AFATCSSHLTVVILFYGAAIYTY. The Extracellular portion of the chain corresponds to 292 to 304; that stretch reads MLPSSYHTPEKDM. A helical transmembrane segment spans residues 305–324; sequence MVSVFYTILTPVVNPLIYSL. Over 325-348 the chain is Cytoplasmic; the sequence is RNKDVMGALKKMLTVEPAFQKAME.

Belongs to the G-protein coupled receptor 1 family.

It is found in the cell membrane. In terms of biological role, odorant receptor. The sequence is that of Olfactory receptor 2T4 (OR2T4) from Homo sapiens (Human).